Reading from the N-terminus, the 532-residue chain is Deoxyribodipyrimidine photo-lyase (532 aa).

Positions Met1–Gly57 are disordered. Residues Ala24–Phe34 show a composition bias toward basic residues. Positions Gln41 to Ala55 are enriched in basic and acidic residues. The 133-residue stretch at Gln97 to Cys229 folds into the Photolyase/cryptochrome alpha/beta domain. Arg322 contacts DNA. Interaction with DNA stretches follow at residues Glu368–Ala376 and Gly442–Phe443. Tyr468–Asn470 is an FAD binding site.

The protein belongs to the DNA photolyase class-2 family. It depends on FAD as a cofactor.

The enzyme catalyses cyclobutadipyrimidine (in DNA) = 2 pyrimidine residues (in DNA).. In terms of biological role, involved in repair of UV radiation-induced DNA damage. Catalyzes the light-dependent monomerization (300-600 nm) of cyclobutyl pyrimidine dimers (in cis-syn configuration), which are formed between adjacent bases on the same DNA strand upon exposure to ultraviolet radiation. This Potorous tridactylus (Potoroo) protein is Deoxyribodipyrimidine photo-lyase (PHR).